A 470-amino-acid polypeptide reads, in one-letter code: Na(+)/H(+) antiporter NhaA 2 (470 aa).

11 consecutive transmembrane segments (helical) span residues 34–54, 85–105, 121–141, 150–170, 179–199, 202–222, 241–261, 317–337, 357–377, 395–415, and 423–443; these read FLHI…IALL, LEWV…GMEI, ALPA…YLLL, GWGV…TLLG, VLLL…IAVF, SGVA…VFAM, WAGV…IGLI, SLIA…FALA, LATA…ACWL, LLVL…IAQL, and LAAG…VALV.

The protein belongs to the NhaA Na(+)/H(+) (TC 2.A.33) antiporter family.

The protein resides in the cell inner membrane. The catalysed reaction is Na(+)(in) + 2 H(+)(out) = Na(+)(out) + 2 H(+)(in). Functionally, na(+)/H(+) antiporter that extrudes sodium in exchange for external protons. This Myxococcus xanthus (strain DK1622) protein is Na(+)/H(+) antiporter NhaA 2.